A 661-amino-acid chain; its full sequence is PAN2-PAN3 deadenylation complex subunit pan3 (661 aa).

2 disordered regions span residues 1-29 (MASV…NAKD) and 53-131 (DPHK…RQDA). A C3H1-type zinc finger spans residues 26–55 (NAKDTLCRNVTIYGRCRYEDKGCAFNHDPH). The PABPC-interacting motif-2 (PAM-2) signature appears at 63–83 (NASKKRFNVDSPSFTPSLLPS). The span at 77–104 (TPSLLPSNGSSPTSSSSSLKKSSTISPK) shows a compositional bias: low complexity. The segment covering 115 to 126 (TAASRSNTSTPG) has biased composition (polar residues). The segment at 263–524 (QTLPNTQLPA…NIDILINGIS (262 aa)) is pseudokinase domain. ATP is bound by residues Arg-315, 364–371 (DYHPLSKT), and 424–425 (SK). Residues 525–563 (SQLMSTFDSALHLDDQLTSDLGRELENGRLVRLLTKLNF) are a coiled coil. Residues 564 to 661 (INERPEHEHD…ALLRPSRRPH (98 aa)) are knob domain.

The protein belongs to the protein kinase superfamily. PAN3 family. As to quaternary structure, homodimer. Forms a heterotrimer with a catalytic subunit pan2 to form the poly(a)-nuclease (PAN) deadenylation complex. Interacts (via PAM-2 motif) with poly(A)-binding protein pab1 (via PABC domain), conferring substrate specificity of the enzyme complex.

The protein localises to the cytoplasm. Regulatory subunit of the poly(A)-nuclease (PAN) deadenylation complex, one of two cytoplasmic mRNA deadenylases involved in mRNA turnover. PAN specifically shortens poly(A) tails of RNA and the activity is stimulated by poly(A)-binding protein pab1. PAN deadenylation is followed by rapid degradation of the shortened mRNA tails by the CCR4-NOT complex. Deadenylated mRNAs are then degraded by two alternative mechanisms, namely exosome-mediated 3'-5' exonucleolytic degradation, or deadenylation-dependent mRNA decaping and subsequent 5'-3' exonucleolytic degradation by XRN1. May also be involved in post-transcriptional maturation of mRNA poly(A) tails. pan3 acts as a positive regulator for PAN activity, recruiting the catalytic subunit pan2 to mRNA via its interaction with RNA and with pab1. This Emericella nidulans (strain FGSC A4 / ATCC 38163 / CBS 112.46 / NRRL 194 / M139) (Aspergillus nidulans) protein is PAN2-PAN3 deadenylation complex subunit pan3.